We begin with the raw amino-acid sequence, 373 residues long: Nuclear hormone receptor family member nhr-69 (373 aa).

Positions 3-78 form a DNA-binding region, nuclear receptor; that stretch reads EEICHICNDK…AGMKSNAIQN (76 aa). 2 consecutive NR C4-type zinc fingers follow at residues 6–26 and 42–66; these read CHIC…CDGC and CRFE…LQKC. The NR LBD domain maps to 93 to 344; the sequence is EKEDLIDQLV…SLMEELILND (252 aa).

It belongs to the nuclear hormone receptor family. As to quaternary structure, interacts with R-SMAD daf-8. Expressed in the ASI neurons, hypodermis, and in tail neurons.

The protein resides in the nucleus. Orphan nuclear receptor which, in cooperation with R-SMAD daf-8, modulates the Insulin/IGF-1-like signaling (IIS) pathway, perhaps by regulating expression of the potassium channel exp-2, which in turn modulates the secretion of insulin-like peptide daf-28. This is Nuclear hormone receptor family member nhr-69 (nhr-69) from Caenorhabditis elegans.